The chain runs to 75 residues: Accessory gland-specific peptide 57Da (75 aa).

Residues 1 to 19 (MKFLALFVTLLVVLALVSA) form the signal peptide. Positions 55 to 75 (AAPAAAPAAPEAGLADAPAES) are disordered. The span at 56-75 (APAAAPAAPEAGLADAPAES) shows a compositional bias: low complexity.

Lumen fluid of male accessory glands, becomes seminal fluid.

The protein localises to the secreted. In terms of biological role, transferred from male to female during mating and may affect egglaying and behavior after mating. This is Accessory gland-specific peptide 57Da (Mst57Da) from Drosophila melanogaster (Fruit fly).